Consider the following 318-residue polypeptide: ATP-dependent (S)-NAD(P)H-hydrate dehydratase (318 aa).

The region spanning A3–L313 is the YjeF C-terminal domain. (6S)-NADPHX contacts are provided by residues G119 and N172–R178. ATP-binding positions include K210–D214 and T229–G238. A (6S)-NADPHX-binding site is contributed by D239.

It belongs to the NnrD/CARKD family. Mg(2+) serves as cofactor.

It is found in the cytoplasm. The enzyme catalyses (6S)-NADHX + ATP = ADP + phosphate + NADH + H(+). The catalysed reaction is (6S)-NADPHX + ATP = ADP + phosphate + NADPH + H(+). Its function is as follows. Catalyzes the dehydration of the S-form of NAD(P)HX at the expense of ATP, which is converted to ADP. Together with NAD(P)HX epimerase, which catalyzes the epimerization of the S- and R-forms, the enzyme allows the repair of both epimers of NAD(P)HX, a damaged form of NAD(P)H that is a result of enzymatic or heat-dependent hydration. The chain is ATP-dependent (S)-NAD(P)H-hydrate dehydratase from Batrachochytrium dendrobatidis (strain JAM81 / FGSC 10211) (Frog chytrid fungus).